A 565-amino-acid chain; its full sequence is NAD-dependent malic enzyme (565 aa).

Catalysis depends on Tyr-104, which acts as the Proton donor. Arg-157 is an NAD(+) binding site. Residue Lys-175 is the Proton acceptor of the active site. Residues Glu-246, Asp-247, and Asp-270 each contribute to the a divalent metal cation site. 2 residues coordinate NAD(+): Asp-270 and Asn-418.

It belongs to the malic enzymes family. Homotetramer. The cofactor is Mg(2+). Mn(2+) is required as a cofactor.

It catalyses the reaction (S)-malate + NAD(+) = pyruvate + CO2 + NADH. The catalysed reaction is oxaloacetate + H(+) = pyruvate + CO2. The polypeptide is NAD-dependent malic enzyme (Shigella flexneri serotype 5b (strain 8401)).